Reading from the N-terminus, the 301-residue chain is Amylovoran biosynthesis glycosyltransferase AmsB (301 aa).

The protein belongs to the glycosyltransferase 2 family.

Its pathway is glycan metabolism; exopolysaccharide biosynthesis. Functionally, involved in the biosynthesis of amylovoran, which functions as a virulence factor. May function as a glycosyl transferase which transfers galactose from UDP-galactose to a lipid-linked amylovoran-subunit precursor. The sequence is that of Amylovoran biosynthesis glycosyltransferase AmsB (amsB) from Erwinia amylovora (Fire blight bacteria).